The sequence spans 327 residues: Ribosomal RNA large subunit methyltransferase F (327 aa).

Residues 1 to 31 (MTHPVTPKNTTRPTPANKPAASTLHPRNPHQ) are disordered.

This sequence belongs to the methyltransferase superfamily. METTL16/RlmF family.

It is found in the cytoplasm. It catalyses the reaction adenosine(1618) in 23S rRNA + S-adenosyl-L-methionine = N(6)-methyladenosine(1618) in 23S rRNA + S-adenosyl-L-homocysteine + H(+). In terms of biological role, specifically methylates the adenine in position 1618 of 23S rRNA. This Psychrobacter sp. (strain PRwf-1) protein is Ribosomal RNA large subunit methyltransferase F.